Reading from the N-terminus, the 321-residue chain is Nucleus-vacuole junction protein 1 (321 aa).

The signal sequence occupies residues 1–22 (MTRPPLVRGIFSLGLSVAVLKG). The segment at 73–125 (ELSWRKVFNFISRQSSELDTRIYVLILLLSFLLPIAWTVLDGDRETTLEDKDN) is TSC13-binding. A helical transmembrane segment spans residues 94–114 (IYVLILLLSFLLPIAWTVLDG). The interval 139–195 (KHYNDGERAVLQFGKNRSEPIILSYKDMNVLEGEHEFTSKEEHSNSHLTSKSENALN) is OSH1-binding. A phosphoserine mark is found at Ser156 and Ser199. The segment at 211–275 (LEEDKNEPNG…SLKSSTSFPI (65 aa)) is disordered. The interval 233 to 321 (DCSSSSEVES…EQAYSQPFRY (89 aa)) is VAC8-binding. Basic and acidic residues predominate over residues 242–262 (SQSKCRKESTAEPDSLSRDTR). The segment covering 263–272 (TTSSLKSSTS) has biased composition (low complexity). Residues Ser285 and Ser298 each carry the phosphoserine modification. The disordered stretch occupies residues 299–321 (PTKSSNLDAQVNTEQAYSQPFRY).

Interacts with OSH1, TSC13 and VAC8.

It localises to the nucleus outer membrane. Functionally, involved in the formation of nucleus-vacuole junctions (NVJs) during piecemeal microautophagy of the nucleus (PMN). NVJs are interorganelle interfaces mediated by NVJ1 in the nuclear envelope and VAC8 on the vacuole membrane. Together, NVJ1 and VAC8 form Velcro-like patches through which teardrop-like portions of the nucleus are pinched off into the vacuolar lumen and degraded by the PMN process. Also acts as an outer-nuclear membrane receptor for OSH1 and TSC13. The polypeptide is Nucleus-vacuole junction protein 1 (NVJ1) (Saccharomyces cerevisiae (strain ATCC 204508 / S288c) (Baker's yeast)).